A 213-amino-acid chain; its full sequence is tRNA (guanine-N(7)-)-methyltransferase (213 aa).

4 residues coordinate S-adenosyl-L-methionine: Asp-40, Glu-65, Asn-92, and Asp-118. Residue Asp-118 is part of the active site. Residues Lys-122 and Asp-154 each contribute to the substrate site.

The protein belongs to the class I-like SAM-binding methyltransferase superfamily. TrmB family.

It catalyses the reaction guanosine(46) in tRNA + S-adenosyl-L-methionine = N(7)-methylguanosine(46) in tRNA + S-adenosyl-L-homocysteine. The protein operates within tRNA modification; N(7)-methylguanine-tRNA biosynthesis. In terms of biological role, catalyzes the formation of N(7)-methylguanine at position 46 (m7G46) in tRNA. This chain is tRNA (guanine-N(7)-)-methyltransferase, found in Synechococcus elongatus (strain ATCC 33912 / PCC 7942 / FACHB-805) (Anacystis nidulans R2).